A 398-amino-acid polypeptide reads, in one-letter code: L-rhamnonate dehydratase (398 aa).

Substrate-binding residues include His22 and Arg48. Asp214, Glu241, and Glu269 together coordinate Mg(2+). His319 functions as the Proton acceptor in the catalytic mechanism. Substrate is bound at residue Glu339.

Belongs to the mandelate racemase/muconate lactonizing enzyme family. RhamD subfamily. As to quaternary structure, homooctamer; tetramer of dimers. Requires Mg(2+) as cofactor.

The catalysed reaction is L-rhamnonate = 2-dehydro-3-deoxy-L-rhamnonate + H2O. Catalyzes the dehydration of L-rhamnonate to 2-keto-3-deoxy-L-rhamnonate (KDR). In Verminephrobacter eiseniae (strain EF01-2), this protein is L-rhamnonate dehydratase.